Consider the following 191-residue polypeptide: Protein 2 in picA locus (191 aa).

The protein belongs to the acyltransferase 3 family.

Its subcellular location is the cell membrane. Its function is as follows. Seems to regulate the surface properties of the bacterium in the presence of plant cells or plant cell extracts. This chain is Protein 2 in picA locus, found in Rhizobium radiobacter (Agrobacterium tumefaciens).